The primary structure comprises 568 residues: Sulfite reductase [NADPH] hemoprotein beta-component (568 aa).

[4Fe-4S] cluster contacts are provided by Cys-425, Cys-431, Cys-470, and Cys-474. Cys-474 lines the siroheme pocket.

Belongs to the nitrite and sulfite reductase 4Fe-4S domain family. In terms of assembly, alpha(8)-beta(8). The alpha component is a flavoprotein, the beta component is a hemoprotein. Requires siroheme as cofactor. [4Fe-4S] cluster is required as a cofactor.

It carries out the reaction hydrogen sulfide + 3 NADP(+) + 3 H2O = sulfite + 3 NADPH + 4 H(+). It participates in sulfur metabolism; hydrogen sulfide biosynthesis; hydrogen sulfide from sulfite (NADPH route): step 1/1. Component of the sulfite reductase complex that catalyzes the 6-electron reduction of sulfite to sulfide. This is one of several activities required for the biosynthesis of L-cysteine from sulfate. This is Sulfite reductase [NADPH] hemoprotein beta-component from Xanthomonas campestris pv. campestris (strain B100).